Consider the following 240-residue polypeptide: 14-3-3 protein 3 (240 aa).

The protein belongs to the 14-3-3 family. Interacts with coactosin. Interacts with ACTO/actophorin.

The protein resides in the cytoplasm. It is found in the cell projection. The protein localises to the phagocytic cup. In terms of biological role, adapter protein which is required for phagocytosis and motility, probably by regulating actin cytoskeleton dynamics. During phagocytosis, plays a role in the initiation and/or formation of the phagocytic cup and is involved in the recruitment of the actin binding protein coactosin to the phagocytic cup. In Entamoeba histolytica (strain ATCC 30459 / HM-1:IMSS / ABRM), this protein is 14-3-3 protein 3.